We begin with the raw amino-acid sequence, 386 residues long: Patatin group M-1 (386 aa).

The signal sequence occupies residues 1-23 (MATTKSFLILFFMILATTSSTCA). The region spanning 32–229 (LSIDGGGIKG…TVGDPALLSL (198 aa)) is the PNPLA domain. Residues 36-41 (GGGIKG) carry the GXGXXG motif. A GXSXG motif is present at residues 75-79 (GTSTG). S77 acts as the Nucleophile in catalysis. A glycan (N-linked (GlcNAc...) asparagine) is linked at N115. Catalysis depends on D215, which acts as the Proton acceptor. Positions 215 to 217 (DGG) match the DGA/G motif.

Belongs to the patatin family. Tuber.

It is found in the vacuole. Its function is as follows. Probable lipolytic acyl hydrolase (LAH), an activity which is thought to be involved in the response of tubers to pathogens. This is Patatin group M-1 from Solanum tuberosum (Potato).